The sequence spans 184 residues: Flagellar transcriptional regulator FlhC (184 aa).

Residues cysteine 144, cysteine 147, cysteine 163, and cysteine 166 each coordinate Zn(2+).

Belongs to the FlhC family. In terms of assembly, heterohexamer composed of two FlhC and four FlhD subunits. Each FlhC binds a FlhD dimer, forming a heterotrimer, and a hexamer assembles by dimerization of two heterotrimers. It depends on Zn(2+) as a cofactor.

The protein resides in the cytoplasm. Its function is as follows. Functions in complex with FlhD as a master transcriptional regulator that regulates transcription of several flagellar and non-flagellar operons by binding to their promoter region. Activates expression of class 2 flagellar genes, including fliA, which is a flagellum-specific sigma factor that turns on the class 3 genes. Also regulates genes whose products function in a variety of physiological pathways. In Verminephrobacter eiseniae (strain EF01-2), this protein is Flagellar transcriptional regulator FlhC.